We begin with the raw amino-acid sequence, 227 residues long: PKHD-type hydroxylase Veis_3084 (227 aa).

The segment at 27–51 is disordered; the sequence is DDGKDSAGTQARQAKNNQQLPRDSE. The segment covering 33 to 47 has biased composition (polar residues); it reads AGTQARQAKNNQQLP. The 102-residue stretch at 78–179 folds into the Fe2OG dioxygenase domain; it reads RVFPPRVNRY…RMACFFWVES (102 aa). Residues His-97, Asp-99, and His-160 each contribute to the Fe cation site. Residue Arg-170 participates in 2-oxoglutarate binding.

Fe(2+) is required as a cofactor. It depends on L-ascorbate as a cofactor.

In Verminephrobacter eiseniae (strain EF01-2), this protein is PKHD-type hydroxylase Veis_3084.